A 276-amino-acid polypeptide reads, in one-letter code: Large ribosomal subunit protein uL2 (276 aa).

2 disordered regions span residues 36 to 55 and 219 to 276; these read PLPR…RHRG and TVRG…GRKK. The segment covering 255–276 has biased composition (basic residues); that stretch reads LGKKTRKKKNRSNKLIVRGRKK.

Belongs to the universal ribosomal protein uL2 family. In terms of assembly, part of the 50S ribosomal subunit. Forms a bridge to the 30S subunit in the 70S ribosome.

Its function is as follows. One of the primary rRNA binding proteins. Required for association of the 30S and 50S subunits to form the 70S ribosome, for tRNA binding and peptide bond formation. It has been suggested to have peptidyltransferase activity; this is somewhat controversial. Makes several contacts with the 16S rRNA in the 70S ribosome. This chain is Large ribosomal subunit protein uL2, found in Macrococcus caseolyticus (strain JCSC5402) (Macrococcoides caseolyticum).